Reading from the N-terminus, the 242-residue chain is Uridylate kinase (242 aa).

16–19 (KVSG) provides a ligand contact to ATP. A UMP-binding site is contributed by G58. ATP is bound by residues G59 and R63. Residues D78 and 139-146 (TGNPFCTT) each bind UMP. ATP is bound by residues T166, Q167, Y172, and D175.

The protein belongs to the UMP kinase family. In terms of assembly, homohexamer.

It localises to the cytoplasm. It carries out the reaction UMP + ATP = UDP + ADP. It participates in pyrimidine metabolism; CTP biosynthesis via de novo pathway; UDP from UMP (UMPK route): step 1/1. With respect to regulation, inhibited by UTP. Functionally, catalyzes the reversible phosphorylation of UMP to UDP. In Rickettsia conorii (strain ATCC VR-613 / Malish 7), this protein is Uridylate kinase.